The following is a 561-amino-acid chain: Reductase FVEG_12641 (561 aa).

The tract at residues 1–26 is disordered; it reads MGVQSTANLPKETVSHLDTAPTPKPG. One can recognise an MOSC domain in the interval 52-189; it reads QQHDGPVFCS…ICKGDTISLL (138 aa). Residues 237-342 form the FAD-binding FR-type domain; the sequence is SAPKTYTLVD…PGSNPGAMEN (106 aa). FMN is bound by residues 288–289, 305–307, 313–316, and T362; these read FE, GVS, and RGGS. Positions 474–561 constitute a 2Fe-2S ferredoxin-type domain; it reads FEVEVDEPDS…GIGRLRIEID (88 aa). A [2Fe-2S] cluster-binding site is contributed by C512. S514 is a binding site for FMN. Residues C517, C520, and C548 each contribute to the [2Fe-2S] cluster site.

Belongs to the PDR/VanB family. Monomer. It depends on FMN as a cofactor.

Its function is as follows. Reductase; part of the Fusarium detoxification of benzoxazolinone cluster 2 (FDB2) involved in the degradation of benzoxazolinones produced by the host plant. Maize, wheat, and rye produce the 2 benzoxazinone phytoanticipins 2,4-dihy-droxy-7-methoxy-1,4-benzoxazin-3-one (DIMBOA) and 2,4-dihydroxy-1,4-benzoxazin-3-one (DIBOA) that, due to their inherent instability once released, spontaneously degrade to the more stable corresponding benzoxazolinones, 6-methoxy-2-benzoxazolinone (MBOA) and 2-benzoxazolinone (BOA), respectively. The first step in the detoxification of benzoxazolinones involves the hydrolysis of the cyclic ester bond of benzoxazolinones by the FDB1 cluster gamma-lactamase MBL1 to aminophenols. MBL1 is able to convert BOA into 2-aminophenol (2-AP), as well as MBOA into 5-methoxy-2-aminophenol (2-AMP). The FDB2 cluster N-malonyltransferase FDB2/NAT1 then metabolizes aminophenols via N-malonylation to non-toxic malonamic acids. FDB2/NAT1 converts 2-AP into N-(2-hydroxyphenyl) malonamic acid (HPMA) and 2-AMP into N-(2-hydroxy-4-methoxyphenyl) malonamic acid (HMPMA). The duplicated dienlactone hydrolases DLH1 and DLH2 may provide redundant function for hydrolyzing the lactone moiety in the BOA molecule. The roles of the amidases an other enzymes encoded by the 2 FDB clusters have not been identified so far. This chain is Reductase FVEG_12641, found in Gibberella moniliformis (strain M3125 / FGSC 7600) (Maize ear and stalk rot fungus).